The following is a 444-amino-acid chain: Homogentisate 1,2-dioxygenase (444 aa).

The active-site Proton acceptor is the His298. 2 residues coordinate Fe cation: His341 and Glu347. The homogentisate site is built by Tyr356 and His377. His377 contacts Fe cation.

Belongs to the homogentisate dioxygenase family. Hexamer; dimer of trimers. Fe cation serves as cofactor.

It carries out the reaction homogentisate + O2 = 4-maleylacetoacetate + H(+). It participates in amino-acid degradation; L-phenylalanine degradation; acetoacetate and fumarate from L-phenylalanine: step 4/6. Functionally, involved in the catabolism of homogentisate (2,5-dihydroxyphenylacetate or 2,5-OH-PhAc), a central intermediate in the degradation of phenylalanine and tyrosine. Catalyzes the oxidative ring cleavage of the aromatic ring of homogentisate to yield maleylacetoacetate. This Burkholderia lata (strain ATCC 17760 / DSM 23089 / LMG 22485 / NCIMB 9086 / R18194 / 383) protein is Homogentisate 1,2-dioxygenase.